Reading from the N-terminus, the 419-residue chain is Peptide chain release factor subunit 1 (419 aa).

Belongs to the eukaryotic release factor 1 family. As to quaternary structure, heterodimer of two subunits, one of which binds GTP.

It localises to the cytoplasm. Directs the termination of nascent peptide synthesis (translation) in response to the termination codons UAA, UAG and UGA. The polypeptide is Peptide chain release factor subunit 1 (Methanococcus maripaludis (strain C6 / ATCC BAA-1332)).